The primary structure comprises 493 residues: Probable phospho-2-dehydro-3-deoxyheptonate aldolase, chloroplastic (493 aa).

The transit peptide at 1–58 directs the protein to the chloroplast; that stretch reads MAMSNTSALASKLLPSCKPHQPTLTFFSPSTTCQKKPRSSRPISAAVHVTQPPKTPIS.

Belongs to the class-II DAHP synthase family.

Its subcellular location is the plastid. The protein resides in the chloroplast. It carries out the reaction D-erythrose 4-phosphate + phosphoenolpyruvate + H2O = 7-phospho-2-dehydro-3-deoxy-D-arabino-heptonate + phosphate. It participates in metabolic intermediate biosynthesis; chorismate biosynthesis; chorismate from D-erythrose 4-phosphate and phosphoenolpyruvate: step 1/7. This Catharanthus roseus (Madagascar periwinkle) protein is Probable phospho-2-dehydro-3-deoxyheptonate aldolase, chloroplastic (DHS1).